An 803-amino-acid chain; its full sequence is Ras GTPase-activating protein 4B (803 aa).

C2 domains follow at residues 1-105 (MAKR…SGWA) and 116-232 (VQGE…EGWF). Asp-21, Asp-27, Asp-74, Asp-76, Ser-79, Asp-82, Asp-149, Asp-155, Asp-202, Asp-204, Ser-207, and Asp-210 together coordinate Ca(2+). The Ras-GAP domain maps to 318-546 (GLAKDFLDLL…AQLKDFITKL (229 aa)). Residues 566–673 (PPVKEGPLFI…WLSALRKVSI (108 aa)) form the PH domain. A Btk-type zinc finger spans residues 675–711 (NTGLLGSYHPGVFRGDKWSCCHQKEKTGQGCDKTRSR). Zn(2+) contacts are provided by His-683, Cys-694, Cys-695, and Cys-705. A disordered region spans residues 781–803 (EAHSSSPAGSPPSEPNCLLELQT).

The cofactor is Ca(2+).

It localises to the cytoplasm. The protein localises to the cytosol. The protein resides in the cell membrane. In terms of biological role, ca(2+)-dependent Ras GTPase-activating protein, that may play a role in the Ras-MAPK pathway. The polypeptide is Ras GTPase-activating protein 4B (RASA4B) (Homo sapiens (Human)).